The following is a 375-amino-acid chain: Circadian-associated transcriptional repressor (375 aa).

A compositionally biased stretch (low complexity) spans 1–32; it reads MDSPSSVSSYSSSSLSPSFSTSSVNSDFSFPS. Disordered stretches follow at residues 1–102, 192–218, and 351–375; these read MDSP…LNTQ, KSSSGGSRHQISKHFPSHHGDPGAASP, and DREMTKGHPEPQMTSHPPVAPDPQP. Residues 33–46 show a composition bias toward basic and acidic residues; that stretch reads DNEREGKGTHELRP.

As to quaternary structure, interacts with BMAL1, PER2, CRY2, BHLHE41, HDAC1 NR3C1.

The protein resides in the nucleus. Its subcellular location is the PML body. Transcriptional repressor which forms a negative regulatory component of the circadian clock and acts independently of the circadian transcriptional repressors: CRY1, CRY2 and BHLHE41. In a histone deacetylase-dependent manner represses the transcriptional activator activity of the CLOCK-BMAL1 heterodimer. Abrogates the interaction of BMAL1 with the transcriptional coactivator CREBBP and can repress the histone acetyl-transferase activity of the CLOCK-BMAL1 heterodimer, reducing histone acetylation of its target genes. Rhythmically binds the E-box elements (5'-CACGTG-3') on circadian gene promoters and its occupancy shows circadian oscillation antiphasic to BMAL1. Interacts with the glucocorticoid receptor (NR3C1) and contributes to the repressive function in the glucocorticoid response. The protein is Circadian-associated transcriptional repressor (Ciart) of Mus musculus (Mouse).